The sequence spans 360 residues: GTP 3',8-cyclase (360 aa).

In terms of domain architecture, Radical SAM core spans 33–251; it reads RFGRSATDLR…LQPHFRLRPD (219 aa). Arg-42 contributes to the GTP binding site. Residues Cys-49 and Cys-53 each contribute to the [4Fe-4S] cluster site. Tyr-55 is a binding site for S-adenosyl-L-methionine. Cys-56 is a binding site for [4Fe-4S] cluster. Arg-93 provides a ligand contact to GTP. Gly-97 contributes to the S-adenosyl-L-methionine binding site. Position 124 (Thr-124) interacts with GTP. An S-adenosyl-L-methionine-binding site is contributed by Ser-148. Lys-185 is a GTP binding site. Met-219 provides a ligand contact to S-adenosyl-L-methionine. Positions 287 and 290 each coordinate [4Fe-4S] cluster. 292–294 serves as a coordination point for GTP; sequence RTR. Cys-304 is a [4Fe-4S] cluster binding site.

It belongs to the radical SAM superfamily. MoaA family. As to quaternary structure, monomer and homodimer. The cofactor is [4Fe-4S] cluster.

It carries out the reaction GTP + AH2 + S-adenosyl-L-methionine = (8S)-3',8-cyclo-7,8-dihydroguanosine 5'-triphosphate + 5'-deoxyadenosine + L-methionine + A + H(+). The protein operates within cofactor biosynthesis; molybdopterin biosynthesis. Functionally, catalyzes the cyclization of GTP to (8S)-3',8-cyclo-7,8-dihydroguanosine 5'-triphosphate. The polypeptide is GTP 3',8-cyclase (Mycobacterium marinum (strain ATCC BAA-535 / M)).